Consider the following 203-residue polypeptide: Cytochrome c oxidase assembly protein CtaG (203 aa).

At 1–16 the chain is on the cytoplasmic side; the sequence is MADQQEKDQKLKKQQR. The chain crosses the membrane as a helical; Signal-anchor for type II membrane protein span at residues 17 to 39; it reads SNATIAFACLSFFVCMIGAAYAS. Over 40–203 the chain is Periplasmic; it reads VPLYRIFCQV…VKAETPTNGS (164 aa).

The protein belongs to the COX11/CtaG family.

It is found in the cell inner membrane. Functionally, exerts its effect at some terminal stage of cytochrome c oxidase synthesis, probably by being involved in the insertion of the copper B into subunit I. The sequence is that of Cytochrome c oxidase assembly protein CtaG from Brucella anthropi (strain ATCC 49188 / DSM 6882 / CCUG 24695 / JCM 21032 / LMG 3331 / NBRC 15819 / NCTC 12168 / Alc 37) (Ochrobactrum anthropi).